We begin with the raw amino-acid sequence, 150 residues long: Transthyretin (150 aa).

A signal peptide spans 1–20 (MAFHSMLLVFLAGLVFLTEA). Cys33 bears the Sulfocysteine mark. The L-thyroxine site is built by Lys38, Glu77, and Ser140.

The protein belongs to the transthyretin family. In terms of assembly, homotetramer. Dimer of dimers. In the homotetramer, subunits assemble around a central channel that can accommodate two ligand molecules. Interacts with RBP4. Sulfonation of the reactive cysteine Cys-33 enhances the stability of the native conformation of TTR, avoiding misassembly of the protein leading to amyloid formation. As to expression, strongly expressed in the brain, and to a lesser extent in the eye.

It localises to the secreted. In terms of biological role, thyroid hormone-binding protein, with a much higher binding affinity for triiodothyronine (T3) than for thyroxine (T4). Probably transports triiodothyronine from the bloodstream to the brain. This is Transthyretin (TTR) from Crocodylus porosus (Saltwater crocodile).